The sequence spans 163 residues: Phosphopantetheine adenylyltransferase (163 aa).

Thr9 contacts substrate. ATP contacts are provided by residues 9–10 and His17; that span reads TF. Substrate contacts are provided by Lys41, Leu73, and Arg87. ATP-binding positions include 88-90, Glu98, and 123-129; these read GLR and YQFISGT.

The protein belongs to the bacterial CoaD family. In terms of assembly, homohexamer. Requires Mg(2+) as cofactor.

It is found in the cytoplasm. It carries out the reaction (R)-4'-phosphopantetheine + ATP + H(+) = 3'-dephospho-CoA + diphosphate. The protein operates within cofactor biosynthesis; coenzyme A biosynthesis; CoA from (R)-pantothenate: step 4/5. Its function is as follows. Reversibly transfers an adenylyl group from ATP to 4'-phosphopantetheine, yielding dephospho-CoA (dPCoA) and pyrophosphate. The polypeptide is Phosphopantetheine adenylyltransferase (Herminiimonas arsenicoxydans).